Here is a 280-residue protein sequence, read N- to C-terminus: Bifunctional protein FolD (280 aa).

Residues 166 to 168 (GRS) and Ser191 each bind NADP(+).

This sequence belongs to the tetrahydrofolate dehydrogenase/cyclohydrolase family. Homodimer.

The enzyme catalyses (6R)-5,10-methylene-5,6,7,8-tetrahydrofolate + NADP(+) = (6R)-5,10-methenyltetrahydrofolate + NADPH. It catalyses the reaction (6R)-5,10-methenyltetrahydrofolate + H2O = (6R)-10-formyltetrahydrofolate + H(+). It participates in one-carbon metabolism; tetrahydrofolate interconversion. Its function is as follows. Catalyzes the oxidation of 5,10-methylenetetrahydrofolate to 5,10-methenyltetrahydrofolate and then the hydrolysis of 5,10-methenyltetrahydrofolate to 10-formyltetrahydrofolate. The polypeptide is Bifunctional protein FolD (Marinomonas sp. (strain MWYL1)).